A 410-amino-acid polypeptide reads, in one-letter code: MQRKGILIILDGLGDRPIKELGGLTPLEYANTPNMDKLAKIGILGQQDPIKPGQPAGSDTAHLSIFGYDPYKTYRGRGFFEALGVGLDLDEDDLAFRVNFATLKDGIVVDRRAGRISTEEAHELAKAIQEEVDVGVDFIFKGATGHRAVLVLKGMADGYRVGDNDPHVEGKPPHKFSWEDEESKKVAEILEEFVKKAHEVLERHPINEKRRREGKPVANYLLIRGAGTYPNIPMKFTEQWKVKAAAVIAVALVKGVARAIGFDVYTPEGATGEYNTNEMAKAKKVVELLKDYDFVFLHFKPTDAAGHDNKPKLKAELIERADKMIGYIIDNIDLESTVIAITGDHSTPCEVKNHSGDPVPLLIAGGGVRTDHTERFGEREAMKGGLGRIRGHDIVPIMMDLMNRSEKFGA.

The protein belongs to the BPG-independent phosphoglycerate mutase family. A-PGAM subfamily.

The enzyme catalyses (2R)-2-phosphoglycerate = (2R)-3-phosphoglycerate. Its pathway is carbohydrate degradation; glycolysis; pyruvate from D-glyceraldehyde 3-phosphate: step 3/5. In terms of biological role, catalyzes the interconversion of 2-phosphoglycerate and 3-phosphoglycerate. The polypeptide is 2,3-bisphosphoglycerate-independent phosphoglycerate mutase (Pyrococcus abyssi (strain GE5 / Orsay)).